We begin with the raw amino-acid sequence, 320 residues long: Aminoacyl tRNA synthase complex-interacting multifunctional protein 2 (320 aa).

Residues 82–162 (TPDADLDVTN…HTHSSVKSVP (81 aa)) form an interaction with PRKN region. Residues 162–225 (PENLLKCFGE…FLFSLFGQKH (64 aa)) form an interaction with TP53 region. Residues 220–317 (LFGQKHNAVN…NLAPFNTALK (98 aa)) form the GST C-terminal domain.

In terms of assembly, part of the multisynthetase complex (MSC), a multisubunit complex that groups tRNA ligases for Arg (RARS1), Asp (DARS1), Gln (QARS1), Ile (IARS1), Leu (LARS1), Lys (KARS1), Met (MARS1) the bifunctional ligase for Glu and Pro (EPRS1) and the auxiliary subunits AIMP1/p43, AIMP2/p38 and EEF1E1/p18. Interacts (via N-terminus) with KARS1. Interacts with EPRS1. Forms a linear complex that contains MARS1, EEF1E1, EPRS1 and AIMP2 that is at the core of the multisubunit complex. Binds FUBP1 (via C-terminus). Interacts in both its unphosphorylated and phosphorylated forms with p53/TP53 (via N-terminus) in the nucleus following UV irradiation. Interacts (via N-terminus) with PRKN/parkin (via first RING-type domain). Interacts with TARS3. Phosphorylated on serine residues in response to UV irradiation. In terms of processing, ubiquitinated by PRKN, leading to its degradation by the proteasome. Mutant PRKN fails to ubiquitinate AIMP2 efficiently, allowing its accumulation which may contribute to neurodegeneration associated with Parkinson disease.

It localises to the cytoplasm. The protein resides in the cytosol. The protein localises to the nucleus. Functionally, required for assembly and stability of the aminoacyl-tRNA synthase complex. Mediates ubiquitination and degradation of FUBP1, a transcriptional activator of MYC, leading to MYC down-regulation which is required for aveolar type II cell differentiation. Blocks MDM2-mediated ubiquitination and degradation of p53/TP53. Functions as a proapoptotic factor. The protein is Aminoacyl tRNA synthase complex-interacting multifunctional protein 2 (AIMP2) of Homo sapiens (Human).